Consider the following 760-residue polypeptide: Transferrin receptor protein 1 (760 aa).

Residues 1–67 (MMDQARSAFS…KPKRCSGSIC (67 aa)) are Cytoplasmic-facing. Positions 1–67 (MMDQARSAFS…KPKRCSGSIC (67 aa)) are mediates interaction with SH3BP4. 2 positions are modified to phosphoserine: Ser-10 and Ser-19. Tyr-20 carries the phosphotyrosine modification. The Endocytosis signal signature appears at 20 to 23 (YTRF). Thr-21 carries the post-translational modification Phosphothreonine. Ser-24 is modified (phosphoserine). Residues 58-61 (KPKR) carry the Stop-transfer sequence motif. 2 S-palmitoyl cysteine lipidation sites follow: Cys-62 and Cys-67. A helical; Signal-anchor for type II membrane protein transmembrane segment spans residues 68–88 (YGTIAVIVFFLIGFMIGYLGY). Topologically, residues 89-760 (CKGVEPKTEC…GDVWDIDNEF (672 aa)) are extracellular. Thr-104 is a glycosylation site (O-linked (GalNAc...) threonine). The PA domain occupies 223 to 313 (SKAATVTGKL…GTGDPYTPGF (91 aa)). N-linked (GlcNAc...) asparagine glycans are attached at residues Asn-251 and Asn-317. Residues 569–760 (TMDTYKELIE…GDVWDIDNEF (192 aa)) form a ligand-binding region. A Cell attachment site; required for binding to transferrin motif is present at residues 646 to 648 (RGD). Residue Asn-727 is glycosylated (N-linked (GlcNAc...) asparagine).

Belongs to the peptidase M28 family. M28B subfamily. Homodimer; disulfide-linked. Binds one transferrin or HFE molecule per subunit. Binds the HLA class II histocompatibility antigen, DR1. Interacts with SH3BP3. Interacts with STEAP3; facilitates TFRC endocytosis in erythroid precursor cells. Interacts with GRM2. In terms of assembly, (Microbial infection) Interacts with Guanarito, Junin and Machupo arenavirus glycoprotein complex. As to quaternary structure, (Microbial infection) Interacts with rabies virus protein G. (Microbial infection) Interacts with SARS-CoV-2 spike protein S. Post-translationally, stearoylated by ZDHHC6 which inhibits TFRC-mediated activation of the JNK pathway and promotes mitochondrial fragmentation. Stearoylation does not affect iron uptake. In terms of processing, N- and O-glycosylated, phosphorylated and palmitoylated. The serum form is only glycosylated. Proteolytically cleaved on Arg-100 to produce the soluble serum form (sTfR). Post-translationally, palmitoylated on both Cys-62 and Cys-67. Cys-62 seems to be the major site of palmitoylation.

The protein localises to the cell membrane. The protein resides in the melanosome. Its subcellular location is the secreted. Functionally, cellular uptake of iron occurs via receptor-mediated endocytosis of ligand-occupied transferrin receptor into specialized endosomes. Endosomal acidification leads to iron release. The apotransferrin-receptor complex is then recycled to the cell surface with a return to neutral pH and the concomitant loss of affinity of apotransferrin for its receptor. Transferrin receptor is necessary for development of erythrocytes and the nervous system. A second ligand, the hereditary hemochromatosis protein HFE, competes for binding with transferrin for an overlapping C-terminal binding site. Positively regulates T and B cell proliferation through iron uptake. Acts as a lipid sensor that regulates mitochondrial fusion by regulating activation of the JNK pathway. When dietary levels of stearate (C18:0) are low, promotes activation of the JNK pathway, resulting in HUWE1-mediated ubiquitination and subsequent degradation of the mitofusin MFN2 and inhibition of mitochondrial fusion. When dietary levels of stearate (C18:0) are high, TFRC stearoylation inhibits activation of the JNK pathway and thus degradation of the mitofusin MFN2. Mediates uptake of NICOL1 into fibroblasts where it may regulate extracellular matrix production. In terms of biological role, (Microbial infection) Acts as a receptor for new-world arenaviruses: Guanarito, Junin and Machupo virus. (Microbial infection) Acts as a host entry factor for rabies virus that hijacks the endocytosis of TFRC to enter cells. Its function is as follows. (Microbial infection) Acts as a host entry factor for SARS-CoV, MERS-CoV and SARS-CoV-2 viruses that hijack the endocytosis of TFRC to enter cells. The protein is Transferrin receptor protein 1 (TFRC) of Homo sapiens (Human).